The sequence spans 198 residues: UPF0314 protein Saro_1818 (198 aa).

5 helical membrane-spanning segments follow: residues 13–33, 62–82, 96–116, 153–173, and 177–197; these read GGSL…LGMG, WYSF…HIVW, LALA…PIII, APVL…LWAI, and LALN…WQGG.

The protein belongs to the UPF0314 family.

The protein localises to the cell membrane. This Novosphingobium aromaticivorans (strain ATCC 700278 / DSM 12444 / CCUG 56034 / CIP 105152 / NBRC 16084 / F199) protein is UPF0314 protein Saro_1818.